The chain runs to 74 residues: Sodium channel neurotoxin MeuNaTxalpha-11 (74 aa).

The N-terminal stretch at 1–7 (LMTGVES) is a signal peptide. The LCN-type CS-alpha/beta domain occupies 9–73 (RDAYIAKPHN…VPIRIPGKCH (65 aa)). 4 disulfide bridges follow: Cys19-Cys72, Cys23-Cys45, Cys31-Cys55, and Cys35-Cys57. A propeptide (removed by a carboxypeptidase) is located at residue Arg74.

Belongs to the long (4 C-C) scorpion toxin superfamily. Sodium channel inhibitor family. Alpha subfamily. Expressed by the venom gland.

It is found in the secreted. Functionally, alpha toxins bind voltage-independently at site-3 of sodium channels (Nav) and inhibit the inactivation of the activated channels, thereby blocking neuronal transmission. The chain is Sodium channel neurotoxin MeuNaTxalpha-11 from Mesobuthus eupeus (Lesser Asian scorpion).